A 1106-amino-acid polypeptide reads, in one-letter code: Protein transport protein Sec31A (1106 aa).

WD repeat units lie at residues 4–47 (KEVD…EIFE), 68–111 (RYHK…AGDK), 120–160 (KHTG…TPMT), 166–206 (QPPE…PIIK), 209–254 (DHSN…SPLR), 258–298 (NHAR…VLYE), and 301–342 (TNTQ…DGLR). The tract at residues 161–471 (PGAKTQPPED…IDASQTEFEK (311 aa)) is interaction with SEC13. One copy of the WD 8; interaction with SEC13 repeat lies at 397–430 (SFSFGGKLVTFENVRMPSHQGAEQQQQQHHVFIS). 2 positions are modified to phosphoserine: serine 527 and serine 532. Residue lysine 647 forms a Glycyl lysine isopeptide (Lys-Gly) (interchain with G-Cter in ubiquitin) linkage. Serine 799 carries the post-translational modification Phosphoserine. Positions 800–999 (PKIPYEEQQL…TKKITKKPIP (200 aa)) are interaction with PDCD6. The ALG-2-binding site motif-2 (ABS-2) motif lies at 842–848 (GFIMHGN). The disordered stretch occupies residues 859 to 980 (TSPGHMHTQV…EGAPGAPIGN (122 aa)). A compositionally biased stretch (polar residues) spans 917–939 (PQSQMLQQQPSAPVPLSSQSSFP). Residue threonine 1047 is modified to Phosphothreonine. Serine 1049 carries the post-translational modification Phosphoserine. Lysine 1103 participates in a covalent cross-link: Glycyl lysine isopeptide (Lys-Gly) (interchain with G-Cter in ubiquitin).

The protein belongs to the WD repeat SEC31 family. In terms of assembly, COPII is composed of at least 5 proteins: the SEC23/24 complex, the SEC13/31 complex and SAR1. SEC13 and SEC31 make a 2:2 tetramer that forms the edge element of the COPII outer coat. The tetramer self-assembles in multiple copies to form the complete polyhedral cage. Interacts (via WD 8) with SEC13. Interacts with PDCD6; interaction takes place in response to cytosolic calcium increase and leads to bridge together the BCR(KLHL12) complex and SEC31A, leading to monoubiquitination. Interacts with KLHL12. Monoubiquitinated by the BCR(KLHL12) E3 ubiquitin ligase complex, leading to regulate the size of COPII coats.

The protein resides in the cytoplasm. It is found in the cytoplasmic vesicle. Its subcellular location is the COPII-coated vesicle membrane. The protein localises to the endoplasmic reticulum membrane. Its function is as follows. Component of the coat protein complex II (COPII) which promotes the formation of transport vesicles from the endoplasmic reticulum (ER). The coat has two main functions, the physical deformation of the endoplasmic reticulum membrane into vesicles and the selection of cargo molecules. This Pongo abelii (Sumatran orangutan) protein is Protein transport protein Sec31A (SEC31A).